A 539-amino-acid chain; its full sequence is Glucans biosynthesis protein D (539 aa).

Positions 1–29 (MNRRNLLKASMALAAYGSVSASGLFAARA) form a signal peptide, tat-type signal.

The protein belongs to the OpgD/OpgG family. Predicted to be exported by the Tat system. The position of the signal peptide cleavage has not been experimentally proven.

Its subcellular location is the periplasm. It participates in glycan metabolism; osmoregulated periplasmic glucan (OPG) biosynthesis. Functionally, probably involved in the control of the structural glucose backbone of osmoregulated periplasmic glucans (OPGs). This is Glucans biosynthesis protein D from Pseudomonas syringae pv. syringae (strain B728a).